The primary structure comprises 337 residues: RNA 3'-terminal phosphate cyclase (337 aa).

Residues glutamine 100 and 281-285 (YMGDQ) contribute to the ATP site. The active-site Tele-AMP-histidine intermediate is the histidine 306.

Belongs to the RNA 3'-terminal cyclase family. Type 1 subfamily.

Its subcellular location is the cytoplasm. It catalyses the reaction a 3'-end 3'-phospho-ribonucleotide-RNA + ATP = a 3'-end 2',3'-cyclophospho-ribonucleotide-RNA + AMP + diphosphate. In terms of biological role, catalyzes the conversion of 3'-phosphate to a 2',3'-cyclic phosphodiester at the end of RNA. The mechanism of action of the enzyme occurs in 3 steps: (A) adenylation of the enzyme by ATP; (B) transfer of adenylate to an RNA-N3'P to produce RNA-N3'PP5'A; (C) and attack of the adjacent 2'-hydroxyl on the 3'-phosphorus in the diester linkage to produce the cyclic end product. The biological role of this enzyme is unknown but it is likely to function in some aspects of cellular RNA processing. This Methanothermobacter thermautotrophicus (strain ATCC 29096 / DSM 1053 / JCM 10044 / NBRC 100330 / Delta H) (Methanobacterium thermoautotrophicum) protein is RNA 3'-terminal phosphate cyclase (rtcA).